Consider the following 493-residue polypeptide: GTPase Der (493 aa).

In terms of domain architecture, EngA-type G 1 spans 3-166 (PVIALVGRPN…EALGIFPKDN (164 aa)). GTP-binding positions include 9–16 (GRPNVGKS), 56–60 (DTGGI), and 118–121 (NKVD). The interval 166–195 (NAEEEGEGEPASEEVAEGEEPTRIPGPSEK) is disordered. The segment covering 167–184 (AEEEGEGEPASEEVAEGE) has biased composition (acidic residues). An EngA-type G 2 domain is found at 198-371 (IKIAIIGRPN…SVQESFRSAV (174 aa)). GTP contacts are provided by residues 204–211 (GRPNVGKS), 251–255 (DTAGV), and 316–319 (NKWD). The KH-like domain occupies 372 to 456 (TRWPTSRLTS…PIRIEYKGGE (85 aa)). Residues 454-463 (GGENPYEGKK) show a composition bias toward basic and acidic residues. A disordered region spans residues 454–493 (GGENPYEGKKNSLTARQVNKKRRLMSHHKKAEKKKKDKRR). The segment covering 471–493 (VNKKRRLMSHHKKAEKKKKDKRR) has biased composition (basic residues).

This sequence belongs to the TRAFAC class TrmE-Era-EngA-EngB-Septin-like GTPase superfamily. EngA (Der) GTPase family. Associates with the 50S ribosomal subunit.

In terms of biological role, GTPase that plays an essential role in the late steps of ribosome biogenesis. In Pseudomonas aeruginosa (strain UCBPP-PA14), this protein is GTPase Der.